A 328-amino-acid polypeptide reads, in one-letter code: PhoH-like protein (328 aa).

ATP is bound at residue 135–142; that stretch reads GPAGTGKT.

This sequence belongs to the PhoH family.

It is found in the cytoplasm. The sequence is that of PhoH-like protein from Synechocystis sp. (strain ATCC 27184 / PCC 6803 / Kazusa).